The following is a 298-amino-acid chain: Specificity protein transcription factor 1 (298 aa).

The segment covering 206-218 has biased composition (low complexity); sequence VSSGSESVSARGT. Residues 206–233 are disordered; the sequence is VSSGSESVSARGTSGSGGTGKYPSSRTA. A C2H2-type zinc finger spans residues 260–284; it reads HNCHIAGCGKVYNKSSHLKAHLRWH.

The protein belongs to the Sp1 C2H2-type zinc-finger protein family. Expressed in ASJ sensory neurons, pharyngeal cells, rectal cells, intestine, seam cells, and vulval cells.

Probable transcription factor which modulates gene expression, thereby acting as an ASJ sensory neuron terminal selector gene. The protein is Specificity protein transcription factor 1 of Caenorhabditis elegans.